The primary structure comprises 720 residues: Polyribonucleotide nucleotidyltransferase (720 aa).

Mg(2+)-binding residues include D487 and D493. Residues 554–613 (PRIETFKIPTDKIREVIGTGGKVIREIVEKTGAKVNIEDDGTVKVASSDGEAMKAAIKWI) enclose the KH domain. Residues 623–691 (GQIYDGTVVK…DRGKTRLSMK (69 aa)) enclose the S1 motif domain. The tract at residues 699 to 720 (EDLEAKDKVAEGEKAPREAAGE) is disordered. Residues 701 to 720 (LEAKDKVAEGEKAPREAAGE) are compositionally biased toward basic and acidic residues.

The protein belongs to the polyribonucleotide nucleotidyltransferase family. It depends on Mg(2+) as a cofactor.

The protein resides in the cytoplasm. It catalyses the reaction RNA(n+1) + phosphate = RNA(n) + a ribonucleoside 5'-diphosphate. In terms of biological role, involved in mRNA degradation. Catalyzes the phosphorolysis of single-stranded polyribonucleotides processively in the 3'- to 5'-direction. This Bradyrhizobium diazoefficiens (strain JCM 10833 / BCRC 13528 / IAM 13628 / NBRC 14792 / USDA 110) protein is Polyribonucleotide nucleotidyltransferase.